The chain runs to 217 residues: Dense granule protein 1 (217 aa).

Residues 1–19 form the signal peptide; sequence MARQATFIVALCVCGLAIA. Polar residues predominate over residues 171-183; the sequence is VASEDSALGNSEE. The disordered stretch occupies residues 171 to 217; that stretch reads VASEDSALGNSEEQYVEGTVNGSSDPEQERAGGPLIPEGDEQEVDTE. The N-linked (GlcNAc...) asparagine glycan is linked to asparagine 191. Acidic residues predominate over residues 208-217; that stretch reads EGDEQEVDTE.

This sequence belongs to the Gra7 family.

It is found in the secreted. The sequence is that of Dense granule protein 1 (DG1) from Neospora caninum (Coccidian parasite).